We begin with the raw amino-acid sequence, 274 residues long: Thiamine kinase (274 aa).

This sequence belongs to the thiamine kinase family.

It carries out the reaction thiamine + ATP = thiamine phosphate + ADP + H(+). It functions in the pathway cofactor biosynthesis; thiamine diphosphate biosynthesis; thiamine phosphate from thiamine: step 1/1. Functionally, catalyzes the ATP-dependent phosphorylation of thiamine to thiamine phosphate. Is involved in thiamine salvage. The polypeptide is Thiamine kinase (Salmonella newport (strain SL254)).